The following is a 543-amino-acid chain: Glucose transporter HT1 (543 aa).

The tract at residues 1–24 (MPEYPTEDTNASGKTSGSSPDDHT) is disordered. The Cytoplasmic portion of the chain corresponds to 1–38 (MPEYPTEDTNASGKTSGSSPDDHTDDNAPSFFSCENLC). The segment covering 7-19 (EDTNASGKTSGSS) has biased composition (polar residues). A helical transmembrane segment spans residues 39–59 (IVQVPVSTGSLNGFSIGFVAV). Over 60–120 (YMHLYEIFSG…GSGYNSLESG (61 aa)) the chain is Extracellular. N-linked (GlcNAc...) asparagine glycosylation is found at asparagine 90 and asparagine 91. Residues 121–141 (LFACSMIVGSMIGSIFAGKFL) traverse the membrane as a helical segment. Residues 142-147 (SKFGLK) are Cytoplasmic-facing. A helical transmembrane segment spans residues 148-168 (MSFIVSGVLGIVGSALIHVAT). At 169-172 (RGST) the chain is on the extracellular side. The chain crosses the membrane as a helical span at residues 173 to 193 (LWVMCVGRFLMGLVLGLVCVA). The Cytoplasmic portion of the chain corresponds to 194-212 (SPMYVNENAHPKYRKTIGV). Residues 213–233 (LFQVFTTFGIMFAALLGLAIV) form a helical membrane-spanning segment. The Extracellular segment spans residues 234–248 (KTPGHDKASGLLWRM). Residues 249–269 (QVFCSVSTALSALLLVLGLVV) form a helical membrane-spanning segment. Residues 270-300 (RKSKTSFAGGVDSAGEGVLDPNEYSVRQMLG) are Cytoplasmic-facing. Residues 301–321 (PLAVGAVTAGTLQLTGINAVM) form a helical membrane-spanning segment. Topologically, residues 322 to 337 (NYAPEIMRNIGMDPME) are extracellular. The chain crosses the membrane as a helical span at residues 338-358 (GNSAVMSWNFVTALVAIPLVS). Residues 359 to 364 (RFTMRQ) lie on the Cytoplasmic side of the membrane. The helical transmembrane segment at 365–385 (LFLACSFMASCACLIMCGIPV) threads the bilayer. Residues 386–400 (YPGVASVDNRNIVAT) are Extracellular-facing. A helical transmembrane segment spans residues 401–421 (VGIAVFIAAFEFGVGSCFFVL). Residues 422–436 (AQDLFPRSFRPTGSS) lie on the Cytoplasmic side of the membrane. The chain crosses the membrane as a helical span at residues 437-457 (FVVMAQFIFNIMINLLYPITV). The Extracellular segment spans residues 458–470 (EAISGGKGKSPEK). A helical transmembrane segment spans residues 471 to 491 (GQSVSFIIFGIIGIICFVLQL). At 492–543 (RYLTPWEDGQGTSTSPTARCNAPTSPNNGEGEPATADMSPVEMSTPKHSGAA) the chain is on the cytoplasmic side. Polar residues predominate over residues 503–519 (TSTSPTARCNAPTSPNN). The tract at residues 503–543 (TSTSPTARCNAPTSPNNGEGEPATADMSPVEMSTPKHSGAA) is disordered.

Belongs to the major facilitator superfamily. Sugar transporter (TC 2.A.1.1) family.

The protein localises to the membrane. Functionally, facilitative glucose transporter. Binds D-fructose and cytochalasin-B, but not D-galactose. This Trypanosoma vivax (Duttonella vivax) protein is Glucose transporter HT1 (HT1).